Consider the following 271-residue polypeptide: Very long chain fatty acid elongase 3 (271 aa).

An N-linked (GlcNAc...) asparagine glycan is attached at N6. Transmembrane regions (helical) follow at residues 30-50, 67-87, 116-136, 141-161, 165-187, 199-219, and 236-256; these read FLEE…LLIV, PLIL…LRMW, FWSF…AFII, PLIF…SFGY, VPSG…TYYT, LPMV…IFGI, and HFFW…HFFH.

The protein belongs to the ELO family. ELOVL3 subfamily. In terms of assembly, interacts with TECR. Post-translationally, N-Glycosylated. In terms of tissue distribution, expressed in brown adipose tissue and liver. In the skin, strong expressed in the cells of the inner layer of the outer root sheath of the hair follicles and in the sebocytes of the sebaceous glands. Hardly detectable in the epidermis and not at all in fibroblasts.

Its subcellular location is the endoplasmic reticulum membrane. The catalysed reaction is a very-long-chain acyl-CoA + malonyl-CoA + H(+) = a very-long-chain 3-oxoacyl-CoA + CO2 + CoA. The enzyme catalyses eicosanoyl-CoA + malonyl-CoA + H(+) = 3-oxodocosanoyl-CoA + CO2 + CoA. It carries out the reaction hexadecanoyl-CoA + malonyl-CoA + H(+) = 3-oxooctadecanoyl-CoA + CO2 + CoA. It catalyses the reaction octadecanoyl-CoA + malonyl-CoA + H(+) = 3-oxoeicosanoyl-CoA + CO2 + CoA. The catalysed reaction is (9Z)-octadecenoyl-CoA + malonyl-CoA + H(+) = 3-oxo-(11Z)-eicosenoyl-CoA + CO2 + CoA. The enzyme catalyses (9Z,12Z)-octadecadienoyl-CoA + malonyl-CoA + H(+) = (11Z,14Z)-3-oxoicosa-11,14-dienoyl-CoA + CO2 + CoA. It carries out the reaction (9Z,12Z,15Z)-octadecatrienoyl-CoA + malonyl-CoA + H(+) = (11Z,14Z,17Z)-3-oxoeicosatrienoyl-CoA + CO2 + CoA. It catalyses the reaction docosanoyl-CoA + malonyl-CoA + H(+) = 3-oxotetracosanoyl-CoA + CO2 + CoA. The catalysed reaction is tetradecanoyl-CoA + malonyl-CoA + H(+) = 3-oxohexadecanoyl-CoA + CO2 + CoA. Its pathway is lipid metabolism; polyunsaturated fatty acid biosynthesis. Functionally, catalyzes the first and rate-limiting reaction of the four reactions that constitute the long-chain fatty acids elongation cycle. This endoplasmic reticulum-bound enzymatic process allows the addition of 2 carbons to the chain of long- and very long-chain fatty acids (VLCFAs) per cycle. Condensing enzyme that exhibits activity toward saturated and unsaturated acyl-CoA substrates with higher activity toward C18 acyl-CoAs, especially C18:0 acyl-CoAs. May participate in the production of saturated and monounsaturated VLCFAs of different chain lengths that are involved in multiple biological processes as precursors of membrane lipids and lipid mediators. Participates in the formation of certain VLCFA and triglycerides in certain cells of the hair follicles and the sebaceous glands, required for skin barrier function. Critical enzyme for lipid accumulation and metabolic activity in brown adipocytes during the early phase of the tissue recruitment. Plays a role in lipid storage and in resistance to diet-induced obesity. The chain is Very long chain fatty acid elongase 3 from Mus musculus (Mouse).